An 863-amino-acid polypeptide reads, in one-letter code: Leucine--tRNA ligase (863 aa).

The short motif at 40–51 (PYPSGAGLHVGH) is the 'HIGH' region element. The 'KMSKS' region signature appears at 635–639 (KMSKS). Lys-638 lines the ATP pocket.

This sequence belongs to the class-I aminoacyl-tRNA synthetase family.

It is found in the cytoplasm. The enzyme catalyses tRNA(Leu) + L-leucine + ATP = L-leucyl-tRNA(Leu) + AMP + diphosphate. This Leptospira interrogans serogroup Icterohaemorrhagiae serovar copenhageni (strain Fiocruz L1-130) protein is Leucine--tRNA ligase.